The following is a 123-amino-acid chain: Large ribosomal subunit protein bL19c (123 aa).

This sequence belongs to the bacterial ribosomal protein bL19 family.

The protein resides in the plastid. It is found in the chloroplast. In Pyropia yezoensis (Susabi-nori), this protein is Large ribosomal subunit protein bL19c.